The sequence spans 156 residues: Small ribosomal subunit protein uS7 (156 aa).

Belongs to the universal ribosomal protein uS7 family. Part of the 30S ribosomal subunit. Contacts proteins S9 and S11.

Functionally, one of the primary rRNA binding proteins, it binds directly to 16S rRNA where it nucleates assembly of the head domain of the 30S subunit. Is located at the subunit interface close to the decoding center, probably blocks exit of the E-site tRNA. This chain is Small ribosomal subunit protein uS7, found in Bradyrhizobium sp. (strain BTAi1 / ATCC BAA-1182).